Consider the following 383-residue polypeptide: Acetylornithine deacetylase (383 aa).

Residue histidine 80 coordinates Zn(2+). Aspartate 82 is a catalytic residue. Aspartate 112 serves as a coordination point for Zn(2+). Residue glutamate 144 is part of the active site. Positions 145, 169, and 355 each coordinate Zn(2+).

Belongs to the peptidase M20A family. ArgE subfamily. As to quaternary structure, homodimer. Zn(2+) serves as cofactor. The cofactor is Co(2+). Requires glutathione as cofactor.

Its subcellular location is the cytoplasm. It carries out the reaction N(2)-acetyl-L-ornithine + H2O = L-ornithine + acetate. Its pathway is amino-acid biosynthesis; L-arginine biosynthesis; L-ornithine from N(2)-acetyl-L-ornithine (linear): step 1/1. In terms of biological role, catalyzes the hydrolysis of the amide bond of N(2)-acetylated L-amino acids. Cleaves the acetyl group from N-acetyl-L-ornithine to form L-ornithine, an intermediate in L-arginine biosynthesis pathway, and a branchpoint in the synthesis of polyamines. The polypeptide is Acetylornithine deacetylase (Salmonella choleraesuis (strain SC-B67)).